The sequence spans 201 residues: Protein tirC (201 aa).

The TIR domain occupies 52-186 (ERIKVFIVHG…YVWINYTEDL (135 aa)).

The chain is Protein tirC (tirC) from Dictyostelium discoideum (Social amoeba).